The sequence spans 410 residues: D-amino acid dehydrogenase (410 aa).

G9–G14 contributes to the FAD binding site.

It belongs to the DadA oxidoreductase family. Requires FAD as cofactor.

The protein resides in the cell inner membrane. It catalyses the reaction a D-alpha-amino acid + a quinone + H2O = a 2-oxocarboxylate + a quinol + NH4(+). Its function is as follows. Catalyzes the oxidative deamination of D-amino acids. Has broad substrate specificity; is mostly active on D-proline, and to a lesser extent, on several other D-amino acids such as D-alanine, D-phenylalanine and D-serine. Mediates electron transport from D-proline to coenzyme Q1 in vitro, and is involved in the electron transport chain from D-proline to the c-type cytochrome in vivo. This chain is D-amino acid dehydrogenase, found in Helicobacter pylori (strain ATCC 700392 / 26695) (Campylobacter pylori).